Reading from the N-terminus, the 206-residue chain is Tumor protein D54 (206 aa).

M1 is subject to N-acetylmethionine. Polar residues predominate over residues 1-14 (MDSAGQDINLNSPN). Positions 1 to 24 (MDSAGQDINLNSPNKGLLSDSMTD) are disordered. A phosphoserine mark is found at S3, S12, S19, and S21. Residues 38–82 (VEGLTEAEEEELRAELTKVEEEIVTLRQVLAAKERHCGELKRRLG) are a coiled coil. S96, S149, and S161 each carry phosphoserine. Phosphothreonine is present on T163. Phosphoserine is present on S166. T173 carries the post-translational modification Phosphothreonine. Over residues 175 to 185 (KSKVVGDRENG) the composition is skewed to basic and acidic residues. Residues 175-206 (KSKVVGDRENGSDNLPSSAGSGDKPLSDPAPF) are disordered. 2 positions are modified to phosphoserine: S192 and S195.

This sequence belongs to the TPD52 family. Forms a homodimer or heterodimer with other members of the family. Interacts with MAL2.

This is Tumor protein D54 (TPD52L2) from Homo sapiens (Human).